The chain runs to 254 residues: Small ribosomal subunit protein uS5 (254 aa).

A compositionally biased stretch (polar residues) spans M1–K10. The segment at M1–G34 is disordered. Position 2 is an N-acetylserine (S2). R11 is subject to Asymmetric dimethylarginine; by HMT1; alternate. R11 is subject to Omega-N-methylarginine; by HMT1; alternate. An Omega-N-methylarginine; by HMT1 modification is found at R17. The span at N18–P27 shows a compositional bias: basic residues. A Glycyl lysine isopeptide (Lys-Gly) (interchain with G-Cter in ubiquitin) cross-link involves residue K33. The 64-residue stretch at L76 to I139 folds into the S5 DRBM domain.

Belongs to the universal ribosomal protein uS5 family. In terms of assembly, component of the small ribosomal subunit (SSU). Mature yeast ribosomes consist of a small (40S) and a large (60S) subunit. The 40S small subunit contains 1 molecule of ribosomal RNA (18S rRNA) and 33 different proteins (encoded by 57 genes). The large 60S subunit contains 3 rRNA molecules (25S, 5.8S and 5S rRNA) and 46 different proteins (encoded by 81 genes). Interacts with snoRNA U3. Interacts with MPP10. Component of the ribosomal small subunit (SSU) processome composed of at least 40 protein subunits and snoRNA U3. Post-translationally, N-terminally acetylated by acetyltransferase NatA.

It localises to the cytoplasm. The protein resides in the nucleus. The protein localises to the nucleolus. Its function is as follows. Component of the ribosome, a large ribonucleoprotein complex responsible for the synthesis of proteins in the cell. The small ribosomal subunit (SSU) binds messenger RNAs (mRNAs) and translates the encoded message by selecting cognate aminoacyl-transfer RNA (tRNA) molecules. The large subunit (LSU) contains the ribosomal catalytic site termed the peptidyl transferase center (PTC), which catalyzes the formation of peptide bonds, thereby polymerizing the amino acids delivered by tRNAs into a polypeptide chain. The nascent polypeptides leave the ribosome through a tunnel in the LSU and interact with protein factors that function in enzymatic processing, targeting, and the membrane insertion of nascent chains at the exit of the ribosomal tunnel. uS5 is important for the assembly and function of the 40S ribosomal subunit. Mutations in this protein affects the control of translational fidelity. Involved in nucleolar processing of pre-18S ribosomal RNA and ribosome assembly. The sequence is that of Small ribosomal subunit protein uS5 from Saccharomyces cerevisiae (strain ATCC 204508 / S288c) (Baker's yeast).